Reading from the N-terminus, the 383-residue chain is Oxysterol-binding protein-related protein 4B (383 aa).

The protein belongs to the OSBP family. In terms of tissue distribution, expressed in stems and flowers.

In terms of biological role, may be involved in the transport of sterols. The sequence is that of Oxysterol-binding protein-related protein 4B (ORP4B) from Arabidopsis thaliana (Mouse-ear cress).